The chain runs to 338 residues: MNLQRFPRHPLTFGPTPIQPLKRLSAHLGGQVELYAKREDCNSGLAFGGNKTRKLEYLIPEALAQGCDTLVSIGGIQSNQTRQVAAVAAHLGMKCVLVQENWVNYSDAVYDRVGNIEMSRILGADVRLDAAGFDIGIRPSWEQAMADVRAAGGKPFPIPAGCSEHRLGGLGFVGFAEEVRAQEAELGFKFDYIVVCSVTGSTQAGMVVGFAADGRAERVIGIDASAKPEQTHAQILRIAQNTAELVGLGREITAQDVVLDTRYGGPEYGLPSEGTLEAIRLCARQEGMLTDPVYEGKSMHGMIDKVKRGEFPAGSRVLYAHLGGVPALNAYSFLFRNG.

At lysine 51 the chain carries N6-(pyridoxal phosphate)lysine. Serine 78 functions as the Nucleophile in the catalytic mechanism.

Belongs to the ACC deaminase/D-cysteine desulfhydrase family. In terms of assembly, homotrimer. Requires pyridoxal 5'-phosphate as cofactor.

The catalysed reaction is 1-aminocyclopropane-1-carboxylate + H2O = 2-oxobutanoate + NH4(+). Catalyzes a cyclopropane ring-opening reaction, the irreversible conversion of 1-aminocyclopropane-1-carboxylate (ACC) to ammonia and alpha-ketobutyrate. Allows growth on ACC as a nitrogen source. The chain is 1-aminocyclopropane-1-carboxylate deaminase from Methylibium petroleiphilum (strain ATCC BAA-1232 / LMG 22953 / PM1).